A 396-amino-acid chain; its full sequence is Serine/threonine-protein kinase VRK1 (396 aa).

The Protein kinase domain maps to W37–Y317. Residues I43–I51 and K71 each bind ATP. K71 participates in a covalent cross-link: Glycyl lysine isopeptide (Lys-Gly) (interchain with G-Cter in SUMO2). D177 serves as the catalytic Proton acceptor. S342 is modified (phosphoserine; by PLK3). The disordered stretch occupies residues I354–K396. At T355 the chain carries Phosphothreonine; by autocatalysis. The segment covering K360–G369 has biased composition (basic and acidic residues). A compositionally biased stretch (polar residues) spans W375–R387. S376 carries the phosphoserine modification. A Phosphothreonine modification is found at T378. Residues R387 to R393 form a required for interaction with the nucleosome region.

It belongs to the protein kinase superfamily. CK1 Ser/Thr protein kinase family. VRK subfamily. As to quaternary structure, interacts with HDAC1, KAT2B, SETDB1, KDM3A and KDM4A. Associates with the nucleosome through interactions with nucleosome DNA, histone H2A and histone H2B; the interaction with H2A and H2B is mediated by the nucleosome acidic patch, a cluster of negatively charged residues of H2A and H2B forming a cleft within the nucleosome core. (Microbial infection) Interacts with vaccinia protein B12; this interaction inhibits the repressive activity of the vaccinia virus B12 pseudokinase on viral replication factory formation. In terms of processing, autophosphorylated at various serine and threonine residues. Autophosphorylation does not impair its ability to phosphorylate p53/TP53. Phosphorylation by PLK3 leads to induction of Golgi fragmentation during mitosis. Widely expressed. Highly expressed in fetal liver, testis and thymus.

It is found in the nucleus. The protein localises to the cytoplasm. It localises to the cajal body. The catalysed reaction is L-seryl-[protein] + ATP = O-phospho-L-seryl-[protein] + ADP + H(+). It carries out the reaction L-threonyl-[protein] + ATP = O-phospho-L-threonyl-[protein] + ADP + H(+). Active in presence of Mn(2+), Mg(2+) and Zn(2+), but is not functional with Ca(2+) or Cu(2+). Has a higher affinity for Mn(2+) than for Mg(2+). RAN inhibits its autophosphorylation and its ability to phosphorylate histone H3. Its function is as follows. Serine/threonine kinase involved in the regulation of key cellular processes including the cell cycle, nuclear condensation, transcription regulation, and DNA damage response. Controls chromatin organization and remodeling by mediating phosphorylation of histone H3 on 'Thr-4' and histone H2AX (H2aXT4ph). It also phosphorylates KAT5 in response to DNA damage, promoting KAT5 association with chromatin and histone acetyltransferase activity. Is involved in the regulation of cell cycle progression of neural progenitors, and is required for proper cortical neuronal migration. Is involved in neurite elongation and branching in motor neurons, and has an essential role in Cajal bodies assembly, acting through COIL phosphorylation and the control of coilin degradation. Involved in Golgi disassembly during the cell cycle: following phosphorylation by PLK3 during mitosis, it is required to induce Golgi fragmentation. Phosphorylates BANF1: disrupts its ability to bind DNA, reduces its binding to LEM domain-containing proteins and causes its relocalization from the nucleus to the cytoplasm. Phosphorylates TP53BP1 and p53/TP53 on 'Thr-18', preventing the interaction between p53/TP53 and MDM2. Phosphorylates ATF2 which activates its transcriptional activity. Phosphorylates JUN. This chain is Serine/threonine-protein kinase VRK1, found in Homo sapiens (Human).